Here is a 73-residue protein sequence, read N- to C-terminus: UPF0346 protein Lreu_0775 (73 aa).

The protein belongs to the UPF0346 family.

This is UPF0346 protein Lreu_0775 from Limosilactobacillus reuteri (strain DSM 20016) (Lactobacillus reuteri).